We begin with the raw amino-acid sequence, 100 residues long: Urease subunit gamma (100 aa).

It belongs to the urease gamma subunit family. As to quaternary structure, heterotrimer of UreA (gamma), UreB (beta) and UreC (alpha) subunits. Three heterotrimers associate to form the active enzyme.

It is found in the cytoplasm. The enzyme catalyses urea + 2 H2O + H(+) = hydrogencarbonate + 2 NH4(+). The protein operates within nitrogen metabolism; urea degradation; CO(2) and NH(3) from urea (urease route): step 1/1. The polypeptide is Urease subunit gamma (Chromohalobacter salexigens (strain ATCC BAA-138 / DSM 3043 / CIP 106854 / NCIMB 13768 / 1H11)).